The sequence spans 266 residues: Putative carbamate hydrolase RutD (266 aa).

The protein belongs to the AB hydrolase superfamily. Hydrolase RutD family.

It catalyses the reaction carbamate + 2 H(+) = NH4(+) + CO2. Involved in pyrimidine catabolism. May facilitate the hydrolysis of carbamate, a reaction that can also occur spontaneously. In Escherichia coli O150:H5 (strain SE15), this protein is Putative carbamate hydrolase RutD.